The following is a 118-amino-acid chain: Aspartate 1-decarboxylase (118 aa).

S25 (schiff-base intermediate with substrate; via pyruvic acid) is an active-site residue. A Pyruvic acid (Ser) modification is found at S25. T57 is a substrate binding site. The active-site Proton donor is Y58. 73–75 (GAA) contacts substrate.

It belongs to the PanD family. As to quaternary structure, heterooctamer of four alpha and four beta subunits. It depends on pyruvate as a cofactor. Post-translationally, is synthesized initially as an inactive proenzyme, which is activated by self-cleavage at a specific serine bond to produce a beta-subunit with a hydroxyl group at its C-terminus and an alpha-subunit with a pyruvoyl group at its N-terminus.

The protein resides in the cytoplasm. It catalyses the reaction L-aspartate + H(+) = beta-alanine + CO2. It functions in the pathway cofactor biosynthesis; (R)-pantothenate biosynthesis; beta-alanine from L-aspartate: step 1/1. In terms of biological role, catalyzes the pyruvoyl-dependent decarboxylation of aspartate to produce beta-alanine. This is Aspartate 1-decarboxylase from Phenylobacterium zucineum (strain HLK1).